Consider the following 156-residue polypeptide: Small ribosomal subunit protein uS7 (156 aa).

It belongs to the universal ribosomal protein uS7 family. As to quaternary structure, part of the 30S ribosomal subunit. Contacts proteins S9 and S11.

One of the primary rRNA binding proteins, it binds directly to 16S rRNA where it nucleates assembly of the head domain of the 30S subunit. Is located at the subunit interface close to the decoding center, probably blocks exit of the E-site tRNA. This chain is Small ribosomal subunit protein uS7, found in Bordetella petrii (strain ATCC BAA-461 / DSM 12804 / CCUG 43448).